The following is a 154-amino-acid chain: Protein X (154 aa).

Residues 26–45 (RGRPVSGPLGSLSSSSPSAV) are disordered. Residues 31–43 (SGPLGSLSSSSPS) show a composition bias toward low complexity. Residues 68 to 117 (PCALRFTSARRMETTVNAHQILPKILHKRTLGLSTMSTTDLEAYFKDCLF) are mitochondrial targeting sequence.

It belongs to the orthohepadnavirus protein X family. As to quaternary structure, may form homodimer. May interact with host CEBPA, CFLAR, CREB1, DDB1, E4F1, HBXIP, HSPD1/HSP60, NFKBIA, POLR2E and SMAD4. Interacts with host SMC5-SMC6 complex and induces its degradation. Interacts with host TRPC4AP; leading to prevent ubiquitination of TRPC4AP. Interacts with host PLSCR1; this interaction promotes ubiquitination and degradation of HBx and impairs HBx-mediated cell proliferation. In terms of processing, a fraction may be phosphorylated in insect cells and HepG2 cells, a human hepatoblastoma cell line. Phosphorylated in vitro by host protein kinase C or mitogen-activated protein kinase. N-acetylated in insect cells.

The protein localises to the host cytoplasm. The protein resides in the host nucleus. It localises to the host mitochondrion. In terms of biological role, multifunctional protein that plays a role in silencing host antiviral defenses and promoting viral transcription. Does not seem to be essential for HBV infection. May be directly involved in development of cirrhosis and liver cancer (hepatocellular carcinoma). Most of cytosolic activities involve modulation of cytosolic calcium. The effect on apoptosis is controversial depending on the cell types in which the studies have been conducted. May induce apoptosis by localizing in mitochondria and causing loss of mitochondrial membrane potential. May also modulate apoptosis by binding host CFLAR, a key regulator of the death-inducing signaling complex (DISC). Promotes viral transcription by using the host E3 ubiquitin ligase DDB1 to target the SMC5-SMC6 complex to proteasomal degradation. This host complex would otherwise bind to viral episomal DNA, and prevents its transcription. Moderately stimulates transcription of many different viral and cellular transcription elements. Promoters and enhancers stimulated by HBx contain DNA binding sites for NF-kappa-B, AP-1, AP-2, c-EBP, ATF/CREB, or the calcium-activated factor NF-AT. The protein is Protein X of Hepatitis B virus genotype D subtype ayw (isolate Japan/JYW796/1988) (HBV-D).